The following is a 117-amino-acid chain: RutC family protein HD_0322 (117 aa).

Belongs to the RutC family.

This is RutC family protein HD_0322 from Haemophilus ducreyi (strain 35000HP / ATCC 700724).